Here is a 254-residue protein sequence, read N- to C-terminus: Homeobox protein BarH-like 1 (254 aa).

Residues 1–20 are disordered; that stretch reads MQRPGEPGAARFGPPEGCAD. A DNA-binding region (homeobox) is located at residues 142-201; sequence GRRSRTVFTELQLMGLEKRFEKQKYLSTPDRIDLAESLGLSQLQVKTWYQNRRMKWKKIV. The interval 204–254 is disordered; it reads GGGLESPTKPKGRPKKNSIPTSEQLTEQERAKDAEKPAEVPGEPSDRSRED. Positions 230–254 are enriched in basic and acidic residues; sequence EQERAKDAEKPAEVPGEPSDRSRED.

The protein belongs to the BAR homeobox family. In terms of tissue distribution, widely expressed. Expressed at higher levels in testis and heart. Detected in craniofacial tissue and adult iris, but not in lymphocytes, fibroblasts, choroid retina, retinal pigment epithelium, kidney, or fetal liver.

The protein resides in the nucleus. In terms of biological role, transcription factor, which is involved in craniofacial development, in odontogenesis and in stomach organogenesis. May have a role in the differentiation of molars from incisors. Plays a role in suppressing endodermal Wnt activity. Binds to a regulatory module of the NCAM promoter. This chain is Homeobox protein BarH-like 1 (BARX1), found in Homo sapiens (Human).